The chain runs to 548 residues: ATP synthase subunit alpha (548 aa).

G172–T179 serves as a coordination point for ATP.

The protein belongs to the ATPase alpha/beta chains family. In terms of assembly, F-type ATPases have 2 components, CF(1) - the catalytic core - and CF(0) - the membrane proton channel. CF(1) has five subunits: alpha(3), beta(3), gamma(1), delta(1), epsilon(1). CF(0) has three main subunits: a(1), b(2) and c(9-12). The alpha and beta chains form an alternating ring which encloses part of the gamma chain. CF(1) is attached to CF(0) by a central stalk formed by the gamma and epsilon chains, while a peripheral stalk is formed by the delta and b chains.

It is found in the cell membrane. The catalysed reaction is ATP + H2O + 4 H(+)(in) = ADP + phosphate + 5 H(+)(out). Its function is as follows. Produces ATP from ADP in the presence of a proton gradient across the membrane. The alpha chain is a regulatory subunit. The sequence is that of ATP synthase subunit alpha from Mycobacteroides abscessus (strain ATCC 19977 / DSM 44196 / CCUG 20993 / CIP 104536 / JCM 13569 / NCTC 13031 / TMC 1543 / L948) (Mycobacterium abscessus).